The following is a 463-amino-acid chain: Cysteine--tRNA ligase (463 aa).

C28 is a Zn(2+) binding site. The 'HIGH' region motif lies at 30–40 (VTIYDLCHIGH). 3 residues coordinate Zn(2+): C209, H234, and E238. The 'KMSKS' region motif lies at 266 to 270 (KMSKS). Position 269 (K269) interacts with ATP.

Belongs to the class-I aminoacyl-tRNA synthetase family. In terms of assembly, monomer. Requires Zn(2+) as cofactor.

The protein localises to the cytoplasm. The catalysed reaction is tRNA(Cys) + L-cysteine + ATP = L-cysteinyl-tRNA(Cys) + AMP + diphosphate. This chain is Cysteine--tRNA ligase, found in Tolumonas auensis (strain DSM 9187 / NBRC 110442 / TA 4).